Consider the following 443-residue polypeptide: Ribosomal protein uS12 methylthiotransferase RimO (443 aa).

Residues 10 to 120 enclose the MTTase N-terminal domain; the sequence is PRVGFVSLGC…VVKAVHQHLP (111 aa). [4Fe-4S] cluster-binding residues include cysteine 19, cysteine 55, cysteine 84, cysteine 151, cysteine 155, and cysteine 158. The region spanning 137–375 is the Radical SAM core domain; the sequence is LTPAHYAYLK…DFQEDISTQR (239 aa). The TRAM domain occupies 377-443; the sequence is ERWIGRDITV…VHDLYARPLP (67 aa).

This sequence belongs to the methylthiotransferase family. RimO subfamily. It depends on [4Fe-4S] cluster as a cofactor.

The protein resides in the cytoplasm. It catalyses the reaction L-aspartate(89)-[ribosomal protein uS12]-hydrogen + (sulfur carrier)-SH + AH2 + 2 S-adenosyl-L-methionine = 3-methylsulfanyl-L-aspartate(89)-[ribosomal protein uS12]-hydrogen + (sulfur carrier)-H + 5'-deoxyadenosine + L-methionine + A + S-adenosyl-L-homocysteine + 2 H(+). Functionally, catalyzes the methylthiolation of an aspartic acid residue of ribosomal protein uS12. The chain is Ribosomal protein uS12 methylthiotransferase RimO from Aromatoleum aromaticum (strain DSM 19018 / LMG 30748 / EbN1) (Azoarcus sp. (strain EbN1)).